Consider the following 282-residue polypeptide: Probable septum site-determining protein MinC (282 aa).

Residues 108–127 form a disordered region; sequence AAARSADEESANAAAAAPAA. Over residues 118 to 127 the composition is skewed to low complexity; it reads ANAAAAAPAA.

Belongs to the MinC family. As to quaternary structure, interacts with MinD and FtsZ.

Its function is as follows. Cell division inhibitor that blocks the formation of polar Z ring septums. Rapidly oscillates between the poles of the cell to destabilize FtsZ filaments that have formed before they mature into polar Z rings. Prevents FtsZ polymerization. This chain is Probable septum site-determining protein MinC, found in Paraburkholderia xenovorans (strain LB400).